The chain runs to 497 residues: Argininosuccinate lyase (497 aa).

The protein belongs to the lyase 1 family. Argininosuccinate lyase subfamily.

The protein localises to the cytoplasm. It carries out the reaction 2-(N(omega)-L-arginino)succinate = fumarate + L-arginine. Its pathway is amino-acid biosynthesis; L-arginine biosynthesis; L-arginine from L-ornithine and carbamoyl phosphate: step 3/3. This Clavibacter michiganensis subsp. michiganensis (strain NCPPB 382) protein is Argininosuccinate lyase.